A 144-amino-acid polypeptide reads, in one-letter code: Ribosome-binding factor A (144 aa).

The tract at residues 120 to 144 (DKRRMAESGREEDDAAPDETTEDNA) is disordered. The span at 129-144 (REEDDAAPDETTEDNA) shows a compositional bias: acidic residues.

The protein belongs to the RbfA family. Monomer. Binds 30S ribosomal subunits, but not 50S ribosomal subunits or 70S ribosomes.

It is found in the cytoplasm. Its function is as follows. One of several proteins that assist in the late maturation steps of the functional core of the 30S ribosomal subunit. Associates with free 30S ribosomal subunits (but not with 30S subunits that are part of 70S ribosomes or polysomes). Required for efficient processing of 16S rRNA. May interact with the 5'-terminal helix region of 16S rRNA. The sequence is that of Ribosome-binding factor A from Aeromonas hydrophila subsp. hydrophila (strain ATCC 7966 / DSM 30187 / BCRC 13018 / CCUG 14551 / JCM 1027 / KCTC 2358 / NCIMB 9240 / NCTC 8049).